Reading from the N-terminus, the 724-residue chain is Probable ATP-dependent RNA helicase DDX4 (724 aa).

Residues 1 to 11 (MSGQEDWESEI) show a composition bias toward acidic residues. Disordered stretches follow at residues 1–25 (MSGQ…SNSE) and 37–241 (SSNN…QGPR). Residues 108–130 (SNGKQESGDFTNDDNRTIDDNRR) show a composition bias toward basic and acidic residues. Over residues 168–182 (EQSGFTSNDGFNNET) the composition is skewed to polar residues. Residues 286-314 (LTFEEANLCDSLAKNVCKSGYVKLTPIQK) carry the Q motif motif. One can recognise a Helicase ATP-binding domain in the interval 317-500 (IPIIVAGRDL…REILKPDYLF (184 aa)). 330-337 (AQTGSGKT) lines the ATP pocket. The DEAD box signature appears at 444–447 (DEAD). Positions 512–675 (DVEQMVIEVD…EVPAWLEEVA (164 aa)) constitute a Helicase C-terminal domain. Polar residues predominate over residues 683 to 692 (AYNPRSNKFA). Positions 683-724 (AYNPRSNKFASTDDRKRGDSRGDYSTSGFSPSAAQAEEEDWG) are disordered. The span at 693 to 704 (STDDRKRGDSRG) shows a compositional bias: basic and acidic residues. The segment covering 705-715 (DYSTSGFSPSA) has biased composition (polar residues).

This sequence belongs to the DEAD box helicase family. DDX4/VASA subfamily.

Its subcellular location is the cytoplasm. The enzyme catalyses ATP + H2O = ADP + phosphate + H(+). In terms of biological role, probable ATP-dependent RNA helicase required during spermatogenesis to repress transposable elements and preventing their mobilization, which is essential for the germline integrity. Acts via the piRNA metabolic process, which mediates the repression of transposable elements during meiosis by forming complexes composed of piRNAs and Piwi proteins and governs the methylation and subsequent repression of transposons. Involved in the secondary piRNAs metabolic process, the production of piRNAs in fetal male germ cells through a ping-pong amplification cycle. The polypeptide is Probable ATP-dependent RNA helicase DDX4 (Pelophylax lessonae (Pool frog)).